The chain runs to 187 residues: Orotate phosphoribosyltransferase (187 aa).

Residues Arg-99, Lys-100, Lys-103, His-105, and 125–133 (DDVITTGGS) each bind 5-phospho-alpha-D-ribose 1-diphosphate. Orotate contacts are provided by Thr-129 and Arg-157.

This sequence belongs to the purine/pyrimidine phosphoribosyltransferase family. PyrE subfamily. As to quaternary structure, homodimer. The cofactor is Mg(2+).

The catalysed reaction is orotidine 5'-phosphate + diphosphate = orotate + 5-phospho-alpha-D-ribose 1-diphosphate. It participates in pyrimidine metabolism; UMP biosynthesis via de novo pathway; UMP from orotate: step 1/2. Functionally, catalyzes the transfer of a ribosyl phosphate group from 5-phosphoribose 1-diphosphate to orotate, leading to the formation of orotidine monophosphate (OMP). This is Orotate phosphoribosyltransferase from Leptospira borgpetersenii serovar Hardjo-bovis (strain JB197).